The following is a 436-amino-acid chain: GTPase Der (436 aa).

EngA-type G domains follow at residues 4-167 and 175-351; these read PTVA…PTEA and IKFS…QSQN. Residues 10–17, 57–61, 119–122, 181–188, 229–233, and 294–297 contribute to the GTP site; these read GRPNVGKS, DTGGI, NKVD, DTAGM, and NKWD. The KH-like domain occupies 352 to 436; sequence TRIPSAVLND…PIRLIARKRK (85 aa).

The protein belongs to the TRAFAC class TrmE-Era-EngA-EngB-Septin-like GTPase superfamily. EngA (Der) GTPase family. In terms of assembly, associates with the 50S ribosomal subunit.

Functionally, GTPase that plays an essential role in the late steps of ribosome biogenesis. The polypeptide is GTPase Der (Streptococcus mutans serotype c (strain ATCC 700610 / UA159)).